The chain runs to 398 residues: Thyrotropin-releasing hormone receptor (398 aa).

At 1–28 (MENETGSELNQTQLQPRAVVALEYQVVT) the chain is on the extracellular side. Asparagine 3 and asparagine 10 each carry an N-linked (GlcNAc...) asparagine glycan. A helical membrane pass occupies residues 29–51 (ILLVLIICGLGIVGNIMVVLVVM). Topologically, residues 52–61 (RTKHMRTPTN) are cytoplasmic. Residues 62–83 (CYLVSLAVADLMVLVAAGLPNI) form a helical membrane-spanning segment. Residues 84-99 (TDSIYGSWVYGYVGCL) are Extracellular-facing. A disulfide bond links cysteine 98 and cysteine 179. The helical transmembrane segment at 100–121 (CITYLQYLGINASSCSITAFTI) threads the bilayer. Topologically, residues 122 to 144 (ERYIAICHPIKAQFLCTFSRAKK) are cytoplasmic. The chain crosses the membrane as a helical span at residues 145–168 (IIIFVWAFTSIYCMLWFFLLDLNI). Topologically, residues 169 to 193 (STYKDAIVVSCGYKISRNYYSPIYL) are extracellular. Residues 194–215 (MDFGVFYVVPMILATVLYGFIA) form a helical membrane-spanning segment. The Cytoplasmic portion of the chain corresponds to 216-266 (RILFLNPIPSDPKENSNMWKNDSTHQNKNLNSKTSNRYFNSTVSSRKQVTK). The chain crosses the membrane as a helical span at residues 267 to 288 (MLAVVVILFALLWMPYRTLVVV). At 289 to 296 (NSFLSSPF) the chain is on the extracellular side. Residues 297–319 (QENWFLLFCRICIYLNSAINPVI) traverse the membrane as a helical segment. Residues 320-398 (YNLMSQKFRA…LASEITFNQS (79 aa)) are Cytoplasmic-facing.

It belongs to the G-protein coupled receptor 1 family.

It is found in the cell membrane. Its function is as follows. Receptor for thyrotropin-releasing hormone (TRH). Upon ligand binding, this G-protein-coupled receptor triggers activation of the phosphatidylinositol (IP3)-calcium-protein kinase C (PKC) pathway. The chain is Thyrotropin-releasing hormone receptor (TRHR) from Bos taurus (Bovine).